Consider the following 389-residue polypeptide: S-adenosylmethionine synthase (389 aa).

ATP is bound at residue histidine 17. A Mg(2+)-binding site is contributed by aspartate 19. Glutamate 45 provides a ligand contact to K(+). The L-methionine site is built by glutamate 58 and glutamine 101. The tract at residues 101–111 (QSPDISQGVTE) is flexible loop. ATP-binding positions include 168 to 170 (DSK), 234 to 235 (RF), aspartate 243, 249 to 250 (RK), alanine 266, and lysine 270. Position 243 (aspartate 243) interacts with L-methionine. Lysine 274 is a binding site for L-methionine.

This sequence belongs to the AdoMet synthase family. As to quaternary structure, homotetramer; dimer of dimers. Requires Mg(2+) as cofactor. K(+) serves as cofactor.

The protein resides in the cytoplasm. It catalyses the reaction L-methionine + ATP + H2O = S-adenosyl-L-methionine + phosphate + diphosphate. It participates in amino-acid biosynthesis; S-adenosyl-L-methionine biosynthesis; S-adenosyl-L-methionine from L-methionine: step 1/1. Its function is as follows. Catalyzes the formation of S-adenosylmethionine (AdoMet) from methionine and ATP. The overall synthetic reaction is composed of two sequential steps, AdoMet formation and the subsequent tripolyphosphate hydrolysis which occurs prior to release of AdoMet from the enzyme. The sequence is that of S-adenosylmethionine synthase from Syntrophotalea carbinolica (strain DSM 2380 / NBRC 103641 / GraBd1) (Pelobacter carbinolicus).